The primary structure comprises 156 residues: Lipoprotein signal peptidase (156 aa).

The next 3 membrane-spanning stretches (helical) occupy residues 5-25 (FKFIFYFWGAFVLVFALDQWV), 64-84 (YLHLALIGVLFIYLFWQRTLL), and 89-109 (IAFGMMLGAGVSNLLDRFIHG). Residues aspartate 113 and aspartate 130 contribute to the active site. The chain crosses the membrane as a helical span at residues 122–142 (NFAIFNVADVMINISVALILI).

It belongs to the peptidase A8 family.

Its subcellular location is the cell inner membrane. It carries out the reaction Release of signal peptides from bacterial membrane prolipoproteins. Hydrolyzes -Xaa-Yaa-Zaa-|-(S,diacylglyceryl)Cys-, in which Xaa is hydrophobic (preferably Leu), and Yaa (Ala or Ser) and Zaa (Gly or Ala) have small, neutral side chains.. It participates in protein modification; lipoprotein biosynthesis (signal peptide cleavage). Functionally, this protein specifically catalyzes the removal of signal peptides from prolipoproteins. This chain is Lipoprotein signal peptidase, found in Campylobacter jejuni subsp. jejuni serotype O:2 (strain ATCC 700819 / NCTC 11168).